The primary structure comprises 275 residues: Phosphonoacetaldehyde hydrolase (275 aa).

Residue D15 is the Nucleophile of the active site. Mg(2+) is bound by residues D15 and A17. K56 acts as the Schiff-base intermediate with substrate in catalysis. D189 is a binding site for Mg(2+).

Belongs to the HAD-like hydrolase superfamily. PhnX family. As to quaternary structure, homodimer. It depends on Mg(2+) as a cofactor.

The catalysed reaction is phosphonoacetaldehyde + H2O = acetaldehyde + phosphate + H(+). With respect to regulation, inhibited by phosphite, moderately inhibited by phosphonic acids, the corresponding aminophosphonic acids activate the enzyme. Its function is as follows. Involved in phosphonate degradation. The protein is Phosphonoacetaldehyde hydrolase of Pseudomonas aeruginosa (strain ATCC 15692 / DSM 22644 / CIP 104116 / JCM 14847 / LMG 12228 / 1C / PRS 101 / PAO1).